Reading from the N-terminus, the 607-residue chain is Cytosolic Fe-S cluster assembly factor NAR1 (607 aa).

[4Fe-4S] cluster-binding residues include C20, C82, C85, C88, C204, and C259. Residues 430–476 (KPNTGKSTNTTTTTTKSKVNPLAARRRARIANNRGKPETKSTSEVNS) form a disordered region. The span at 432–447 (NTGKSTNTTTTTTKSK) shows a compositional bias: low complexity. Residues C496 and C500 each coordinate [4Fe-4S] cluster.

Belongs to the NARF family.

In terms of biological role, component of the cytosolic Fe/S protein assembly machinery. Required for maturation of extramitochondrial Fe/S proteins. May play a role in the transfer of pre-assembled Fe/S clusters to target apoproteins. The polypeptide is Cytosolic Fe-S cluster assembly factor NAR1 (NAR1) (Candida albicans (strain SC5314 / ATCC MYA-2876) (Yeast)).